The primary structure comprises 198 residues: N-acetyltransferase 9-like protein (198 aa).

In terms of domain architecture, N-acetyltransferase spans 34-178; sequence EEIRRLTGSE…KEITMELPGE (145 aa).

This sequence belongs to the acetyltransferase family. GNAT subfamily.

This chain is N-acetyltransferase 9-like protein, found in Caenorhabditis briggsae.